Here is a 1253-residue protein sequence, read N- to C-terminus: Elongator complex protein 1 (1253 aa).

The tract at residues 830–1253 (VDVNMLFDHA…KPFEKLSILI (424 aa)) is mediates dimerization. Over residues 1126-1141 (YTKSSNSSKMTRNTSK) the composition is skewed to polar residues. The tract at residues 1126-1153 (YTKSSNSSKMTRNTSKNNRRLERKRARG) is disordered. The segment at 1137 to 1155 (RNTSKNNRRLERKRARGKK) is required for binding to tRNA. Basic residues predominate over residues 1142–1153 (NNRRLERKRARG).

Belongs to the ELP1/IKA1 family. In terms of assembly, homodimer. Component of the elongator complex.

Its subcellular location is the cytoplasm. The protein operates within tRNA modification; 5-methoxycarbonylmethyl-2-thiouridine-tRNA biosynthesis. Its function is as follows. Component of the elongator complex, a multiprotein complex which is required for multiple tRNA modifications, including mcm5U (5-methoxycarbonylmethyl uridine), mcm5s2U (5-methoxycarbonylmethyl-2-thiouridine), and ncm5U (5-carbamoylmethyl uridine). The elongator complex catalyzes formation of carboxymethyluridine in the wobble base at position 34 in tRNAs. ELP1 binds to tRNA, mediating interaction of the elongator complex with tRNA. In Schizosaccharomyces pombe (strain 972 / ATCC 24843) (Fission yeast), this protein is Elongator complex protein 1.